The primary structure comprises 266 residues: MNQYYFLSSFLSPQQPESPPLYLFQEINDLLSLNFTEQDWKSYVVLLRFFDLENFAFFWSGKPVPFSFGTVTNNNVETLLRLQMWSDEWEFEDFFKDFLLRYKTSQERLANFSELVRSFLDHYQSYPSEFLRTYFRFKQDLRIILAGFRARVMQKDVSFVLRDEDSSNPVVLHVLMQKDSPNYELPDEFFELKDVLGDYGRLPHMLNQTLSLYEFHKVEEMSRDKYFNADAILSRVTTYLMAIRNSYVSVQKGKELINLMEKGIKW.

Belongs to the chlamydial CPn_0087/CT3_09/TC_0583 family.

This is an uncharacterized protein from Chlamydia muridarum (strain MoPn / Nigg).